A 154-amino-acid chain; its full sequence is MQKQIEIFTDGSCLGNPGPGGIGVLLRYKQHEKQISAGYFLTTNNRMELRAVIEALNTLKEPCSVTLHSDSQYMKNGITKWIFNWKKNNWKASTGKPVKNQDLWIQLDQAIQRHHINWQWVKGHSGHIENEICDQLAKAGAENPTLQDVGYQPE.

In terms of domain architecture, RNase H type-1 spans 1–142 (MQKQIEIFTD…CDQLAKAGAE (142 aa)). Mg(2+) contacts are provided by Asp-10, Glu-48, Asp-70, and Asp-134.

It belongs to the RNase H family. In terms of assembly, monomer. The cofactor is Mg(2+).

The protein resides in the cytoplasm. It carries out the reaction Endonucleolytic cleavage to 5'-phosphomonoester.. In terms of biological role, endonuclease that specifically degrades the RNA of RNA-DNA hybrids. In Pasteurella multocida (strain Pm70), this protein is Ribonuclease HI (rnhA).